Reading from the N-terminus, the 284-residue chain is Bifunctional protein FolD (284 aa).

NADP(+) is bound by residues Gly-166–Ser-168 and Ile-232.

This sequence belongs to the tetrahydrofolate dehydrogenase/cyclohydrolase family. In terms of assembly, homodimer.

It carries out the reaction (6R)-5,10-methylene-5,6,7,8-tetrahydrofolate + NADP(+) = (6R)-5,10-methenyltetrahydrofolate + NADPH. It catalyses the reaction (6R)-5,10-methenyltetrahydrofolate + H2O = (6R)-10-formyltetrahydrofolate + H(+). It functions in the pathway one-carbon metabolism; tetrahydrofolate interconversion. Functionally, catalyzes the oxidation of 5,10-methylenetetrahydrofolate to 5,10-methenyltetrahydrofolate and then the hydrolysis of 5,10-methenyltetrahydrofolate to 10-formyltetrahydrofolate. This chain is Bifunctional protein FolD, found in Shewanella pealeana (strain ATCC 700345 / ANG-SQ1).